The chain runs to 557 residues: Formate--tetrahydrofolate ligase 2 (557 aa).

Residue 66-73 coordinates ATP; that stretch reads TPAGEGKT.

This sequence belongs to the formate--tetrahydrofolate ligase family.

It carries out the reaction (6S)-5,6,7,8-tetrahydrofolate + formate + ATP = (6R)-10-formyltetrahydrofolate + ADP + phosphate. It functions in the pathway one-carbon metabolism; tetrahydrofolate interconversion. This chain is Formate--tetrahydrofolate ligase 2, found in Streptococcus pyogenes serotype M5 (strain Manfredo).